The following is a 473-amino-acid chain: GTPase Der (473 aa).

EngA-type G domains are found at residues 3-166 (PVIA…ENPE) and 177-350 (IRIG…ESAM). GTP is bound by residues 9 to 16 (GRPNVGKS), 56 to 60 (DTGGL), 118 to 121 (NKTD), 183 to 190 (GRPNVGKS), 230 to 234 (DTAGV), and 295 to 298 (NKWD). Positions 351-435 (SKWPTNRLTA…PIRFEFKSGE (85 aa)) constitute a KH-like domain. The span at 444 to 458 (RLTPRQKVKKDNDLK) shows a compositional bias: basic and acidic residues. A disordered region spans residues 444 to 473 (RLTPRQKVKKDNDLKKGRRIKKTRQKSVKR). Residues 459–473 (KGRRIKKTRQKSVKR) are compositionally biased toward basic residues.

It belongs to the TRAFAC class TrmE-Era-EngA-EngB-Septin-like GTPase superfamily. EngA (Der) GTPase family. As to quaternary structure, associates with the 50S ribosomal subunit.

In terms of biological role, GTPase that plays an essential role in the late steps of ribosome biogenesis. The chain is GTPase Der from Marinobacter nauticus (strain ATCC 700491 / DSM 11845 / VT8) (Marinobacter aquaeolei).